The sequence spans 812 residues: MNYQYTNYCCQSNITLPNSLTCTNAKIYVDVGRPNNCLGNDGDLYLDTNTNNLYYKIDGVWTLVSNLRGASGAQGVKGDPGSNGSKGTKGEKGDKGDKGSKGDNGEKGEKGDAGLNGLDGSKGDKGDDGSKGSKGNKGDAIKGEKGDKGEIGDKGDKGEDGLKGVKGDVGDKGDKGDKGDLGLKGVKGDKGITGDKGDKGEIGEKGNKGDKGDVGVKGDDGTKGEKGEKGTKGDKGNKGDKGEDGLKGENGDIGDKGDKGSKGEDGLKGDKGDIGDKGDKGSKGEDGLKGSKGDKGEIGNKGDKGDKGDIGIKGDKGDIGDKGDKGDPGLKGEKGEKGDKGDIGDKGETGSKGSKGDKGDKGDKGDVGDKGSKGDKGDIGEKGDKGSKGDKGDKGDKGDKGDLGDKGDKGDKGETGEKGSKGDKGDKGDKGETGSKGDVGLKGSKGDKGDKGIKGDVGDKGDIGITGDKGDKGVKGDKGDIGLKGDKGDKGTKGDKGSKGDNGSKGETGAKGDKGDKGDKGIKGDTGTKGVKGDKGSKGDKGDLGDTGIKGDKGEKGDPGIKGEAGTNSPFIGTFIDNVPGSGTTIVPFGAIFAYLSAAGGGGGGGGISDGNGSPGGGAAGTVYLYPLTVTSGLVVNYTIGSGGTAGTPVAAGGAGGNTTITIGTLNFTLNGGGGGGIGGTVGAINGGAGGSVTTPLGTTPGGSGGVGNGGPLPGNGQVGLFAFSGAGGGQARTNGASTGGFPGGQTDSNTFGGGGGGASGFAKGGDGEQEIPTTIPAQSGTLGSGGGGPTDVSASGGRGGDGFVRLDYYSA.

N-linked (GlcNAc...) asparagine; by host glycans are attached at residues Asn13 and Asn83. 3 Collagen-like domains span residues 69 to 128, 143 to 502, and 506 to 565; these read GASG…KGDD, GEKG…KGDN, and GETG…KGEA. The tract at residues 71 to 568 is disordered; that stretch reads SGAQGVKGDP…PGIKGEAGTN (498 aa). 4 stretches are compositionally biased toward basic and acidic residues: residues 88-112, 121-435, 444-523, and 531-561; these read TKGE…EKGD, SKGD…ETGS, SKGD…KGIK, and VKGD…DPGI. A glycan (N-linked (GlcNAc...) asparagine; by host) is linked at Asn502. Asn637, Asn658, and Asn667 each carry an N-linked (GlcNAc...) asparagine; by host glycan. A disordered region spans residues 730–802; sequence GQARTNGAST…VSASGGRGGD (73 aa). The span at 752-765 shows a compositional bias: gly residues; that stretch reads FGGGGGGASGFAKG.

May be hydroxylated on lysine by the viral-encoded procollagen-lysine,2-oxoglutarate 5-dioxygenase.

It is found in the virion. In terms of biological role, may participate in the formation of a layer of cross-linked glycosylated fibrils at the viral surface thus giving it a hairy-like appearance. This chain is Collagen-like protein 5, found in Acanthamoeba polyphaga (Amoeba).